We begin with the raw amino-acid sequence, 369 residues long: Superinfection exclusion protein (369 aa).

An N-terminal signal peptide occupies residues 1-15 (MIALLILSLTCSVST).

This sequence belongs to the serpin family. Orthopoxvirus OPG040 subfamily. In terms of assembly, interacts with OPG185/A56 protein.

Its subcellular location is the virion membrane. The protein resides in the host cell membrane. Negatively regulates superinfection and syncytium formation in infected host cells. Acts in concert with OPG185/A56 protein at the host cell membrane by interacting with and inhibiting the mature virion entry/fusion complex (EFC). This mechanism ensures that new virions released from the cell cannot enter already infected cells. The chain is Superinfection exclusion protein (OPG040) from Vaccinia virus (strain Western Reserve) (VACV).